A 295-amino-acid polypeptide reads, in one-letter code: Pyridoxal 5'-phosphate synthase subunit PdxS (295 aa).

Asp25 is a D-ribose 5-phosphate binding site. Lys82 serves as the catalytic Schiff-base intermediate with D-ribose 5-phosphate. Gly154 is a binding site for D-ribose 5-phosphate. Position 166 (Arg166) interacts with D-glyceraldehyde 3-phosphate. D-ribose 5-phosphate contacts are provided by residues Gly215 and 236–237; that span reads GS.

This sequence belongs to the PdxS/SNZ family. In terms of assembly, in the presence of PdxT, forms a dodecamer of heterodimers.

It catalyses the reaction aldehydo-D-ribose 5-phosphate + D-glyceraldehyde 3-phosphate + L-glutamine = pyridoxal 5'-phosphate + L-glutamate + phosphate + 3 H2O + H(+). It participates in cofactor biosynthesis; pyridoxal 5'-phosphate biosynthesis. In terms of biological role, catalyzes the formation of pyridoxal 5'-phosphate from ribose 5-phosphate (RBP), glyceraldehyde 3-phosphate (G3P) and ammonia. The ammonia is provided by the PdxT subunit. Can also use ribulose 5-phosphate and dihydroxyacetone phosphate as substrates, resulting from enzyme-catalyzed isomerization of RBP and G3P, respectively. The protein is Pyridoxal 5'-phosphate synthase subunit PdxS of Macrococcus caseolyticus (strain JCSC5402) (Macrococcoides caseolyticum).